A 474-amino-acid chain; its full sequence is Probable phenylalanine--tRNA ligase alpha subunit (474 aa).

Residues 1 to 150 (MSLSQKILEL…KRKLIYQAKE (150 aa)) form a contains the major tRNA-Phe binding sites region. L-phenylalanine contacts are provided by residues T308, 350–352 (QVE), and Y390. E392 is a binding site for Mg(2+). F416 serves as a coordination point for L-phenylalanine.

It belongs to the class-II aminoacyl-tRNA synthetase family. Phe-tRNA synthetase alpha subunit type 2 subfamily. In terms of assembly, tetramer of two alpha and two beta subunits. Requires Mg(2+) as cofactor.

Its subcellular location is the cytoplasm. It catalyses the reaction tRNA(Phe) + L-phenylalanine + ATP = L-phenylalanyl-tRNA(Phe) + AMP + diphosphate + H(+). This Vairimorpha ceranae (strain BRL01) (Microsporidian parasite) protein is Probable phenylalanine--tRNA ligase alpha subunit.